A 508-amino-acid chain; its full sequence is Glycerol kinase (508 aa).

Thr14 serves as a coordination point for ADP. 3 residues coordinate ATP: Thr14, Thr15, and Ser16. Position 14 (Thr14) interacts with sn-glycerol 3-phosphate. Arg18 contacts ADP. Arg84, Glu85, and Tyr136 together coordinate sn-glycerol 3-phosphate. Residues Arg84, Glu85, and Tyr136 each contribute to the glycerol site. Residue His232 is modified to Phosphohistidine; by HPr. Asp246 is a sn-glycerol 3-phosphate binding site. 2 residues coordinate glycerol: Asp246 and Gln247. Thr268 and Gly311 together coordinate ADP. Residues Thr268, Gly311, Gln315, and Gly412 each contribute to the ATP site. Gly412 and Asn416 together coordinate ADP.

Belongs to the FGGY kinase family. In terms of assembly, homotetramer and homodimer (in equilibrium). The phosphoenolpyruvate-dependent sugar phosphotransferase system (PTS), including enzyme I, and histidine-containing protein (HPr) are required for the phosphorylation, which leads to the activation of the enzyme.

It catalyses the reaction glycerol + ATP = sn-glycerol 3-phosphate + ADP + H(+). It participates in polyol metabolism; glycerol degradation via glycerol kinase pathway; sn-glycerol 3-phosphate from glycerol: step 1/1. Activated by phosphorylation and inhibited by fructose 1,6-bisphosphate (FBP). Key enzyme in the regulation of glycerol uptake and metabolism. Catalyzes the phosphorylation of glycerol to yield sn-glycerol 3-phosphate. The protein is Glycerol kinase of Streptococcus pyogenes serotype M12 (strain MGAS2096).